The primary structure comprises 388 residues: Succinate--CoA ligase [ADP-forming] subunit beta (388 aa).

An ATP-grasp domain is found at 9 to 244; it reads KQLFAEYGLP…PSQDDPREAH (236 aa). ATP-binding positions include lysine 46, 53 to 55, glutamate 99, threonine 102, and glutamate 107; that span reads GRG. The Mg(2+) site is built by asparagine 199 and aspartate 213. Substrate-binding positions include asparagine 264 and 321–323; that span reads GIV.

The protein belongs to the succinate/malate CoA ligase beta subunit family. Heterotetramer of two alpha and two beta subunits. Mg(2+) serves as cofactor.

The catalysed reaction is succinate + ATP + CoA = succinyl-CoA + ADP + phosphate. It catalyses the reaction GTP + succinate + CoA = succinyl-CoA + GDP + phosphate. Its pathway is carbohydrate metabolism; tricarboxylic acid cycle; succinate from succinyl-CoA (ligase route): step 1/1. In terms of biological role, succinyl-CoA synthetase functions in the citric acid cycle (TCA), coupling the hydrolysis of succinyl-CoA to the synthesis of either ATP or GTP and thus represents the only step of substrate-level phosphorylation in the TCA. The beta subunit provides nucleotide specificity of the enzyme and binds the substrate succinate, while the binding sites for coenzyme A and phosphate are found in the alpha subunit. This is Succinate--CoA ligase [ADP-forming] subunit beta from Pseudomonas putida (strain GB-1).